The chain runs to 333 residues: Foldase protein PrsA (333 aa).

An N-terminal signal peptide occupies residues 1–22; that stretch reads MKSAKQIATALLVGMFTFSAVG. Cysteine 23 carries N-palmitoyl cysteine lipidation. A lipid anchor (S-diacylglycerol cysteine) is attached at cysteine 23. One can recognise a PpiC domain in the interval 192–283; the sequence is PNTVHLAHIL…FGWHVIKCIK (92 aa).

The protein belongs to the PrsA family.

It is found in the cell membrane. The catalysed reaction is [protein]-peptidylproline (omega=180) = [protein]-peptidylproline (omega=0). Its function is as follows. Plays a major role in protein secretion by helping the post-translocational extracellular folding of several secreted proteins. The sequence is that of Foldase protein PrsA from Clostridium acetobutylicum (strain ATCC 824 / DSM 792 / JCM 1419 / IAM 19013 / LMG 5710 / NBRC 13948 / NRRL B-527 / VKM B-1787 / 2291 / W).